A 270-amino-acid chain; its full sequence is Putative phosphoenolpyruvate synthase regulatory protein (270 aa).

150–157 lines the ADP pocket; sequence GVSRCGKT.

It belongs to the pyruvate, phosphate/water dikinase regulatory protein family. PSRP subfamily.

The enzyme catalyses [pyruvate, water dikinase] + ADP = [pyruvate, water dikinase]-phosphate + AMP + H(+). It carries out the reaction [pyruvate, water dikinase]-phosphate + phosphate + H(+) = [pyruvate, water dikinase] + diphosphate. Bifunctional serine/threonine kinase and phosphorylase involved in the regulation of the phosphoenolpyruvate synthase (PEPS) by catalyzing its phosphorylation/dephosphorylation. The protein is Putative phosphoenolpyruvate synthase regulatory protein of Shewanella putrefaciens (strain CN-32 / ATCC BAA-453).